The chain runs to 1112 residues: Phytochrome E (1112 aa).

The interval 1–20 (MGFESSSSAASNMKPQPQKS) is disordered. The region spanning 217-387 (DIGALCDTVV…AFGLQLQMEL (171 aa)) is the GAF domain. C322 is a phytochromobilin binding site. 2 PAS domains span residues 595–666 (FVCE…LQGE) and 732–803 (DYKT…LISL). The 220-residue stretch at 877-1096 (YVRQEIKNPL…FFQVDLQVKT (220 aa)) folds into the Histidine kinase domain.

It belongs to the phytochrome family. As to quaternary structure, homodimer. Contains one covalently linked phytochromobilin chromophore.

Functionally, regulatory photoreceptor which exists in two forms that are reversibly interconvertible by light: the Pr form that absorbs maximally in the red region of the spectrum and the Pfr form that absorbs maximally in the far-red region. Photoconversion of Pr to Pfr induces an array of morphogenic responses, whereas reconversion of Pfr to Pr cancels the induction of those responses. Pfr controls the expression of a number of nuclear genes including those encoding the small subunit of ribulose-bisphosphate carboxylase, chlorophyll A/B binding protein, protochlorophyllide reductase, rRNA, etc. It also controls the expression of its own gene(s) in a negative feedback fashion. This chain is Phytochrome E (PHYE), found in Arabidopsis thaliana (Mouse-ear cress).